A 438-amino-acid polypeptide reads, in one-letter code: MPISKIHARYVYDSRGNPTVEVDVVTELGLHRAIVPSGASTGQHEACELRDGDKTKWGGKGVLKAVQNVNEVIGPALIKENIDVKDQSKVDKFLIDLDGTPNKTKLGANAILGVSLAVAKAGAAEKGVPLYAHISDLAGTKKPYVLPVPFMNVLNGGSHAGGRLAFQEFMIVPSAAPTFSEALRQGAEVYQILKSLAKKKYGQSAGNVGDEGGVAPDIQNPEEALDLITEAIEKAGYTGQVKIAMDVASSEFYKEDVKKYDLDFKNPESDPSKWLTYEELANLYSELCKKYPIVSIEDPFAEDDWEAWSYFYKTQDIQIVADDLTVTNPLRIKKAIELKAANALLLKVNQIGTLTESIQAAKDSYADGWGVMVSHRSGETEDVTIADIVVGIRSGQIKTGAPARSERLAKLNQILRIEEELADNAIFAGEKFRKAVEL.

The substrate site is built by His-159 and Glu-168. The Proton donor role is filled by Glu-211. Mg(2+) is bound by residues Asp-246, Glu-297, and Asp-322. 2 residues coordinate substrate: Glu-297 and Asp-322. Catalysis depends on Lys-347, which acts as the Proton acceptor. Residues 374–377 (SHRS) and Lys-398 contribute to the substrate site.

Belongs to the enolase family. As to quaternary structure, homodimer. It depends on Mg(2+) as a cofactor.

It localises to the cytoplasm. The enzyme catalyses (2R)-2-phosphoglycerate = phosphoenolpyruvate + H2O. The protein operates within carbohydrate degradation; glycolysis; pyruvate from D-glyceraldehyde 3-phosphate: step 4/5. This Neurospora crassa (strain ATCC 24698 / 74-OR23-1A / CBS 708.71 / DSM 1257 / FGSC 987) protein is Enolase (emp-7).